We begin with the raw amino-acid sequence, 210 residues long: Outer-membrane lipoprotein LolB (210 aa).

The N-terminal stretch at 1 to 26 (MSKLKIDTKRRFSLLIALVLIISLSS) is a signal peptide. Cysteine 27 carries the N-palmitoyl cysteine lipid modification. Cysteine 27 carries the S-diacylglycerol cysteine lipid modification.

It belongs to the LolB family. In terms of assembly, monomer.

The protein localises to the cell outer membrane. Its function is as follows. Plays a critical role in the incorporation of lipoproteins in the outer membrane after they are released by the LolA protein. In Francisella tularensis subsp. holarctica (strain FTNF002-00 / FTA), this protein is Outer-membrane lipoprotein LolB.